Here is a 418-residue protein sequence, read N- to C-terminus: Actin-related protein 3 (418 aa).

It belongs to the actin family. ARP3 subfamily. In terms of assembly, component of the Arp2/3 complex composed of actr2/arp2, actr3/arp3, arpc1b, arpc2, arpc3, arpc4 and arpc5.

It is found in the cytoplasm. Its subcellular location is the cytoskeleton. It localises to the cell projection. The protein resides in the nucleus. Functionally, ATP-binding component of the Arp2/3 complex, a multiprotein complex that mediates actin polymerization upon stimulation by nucleation-promoting factor (NPF). The Arp2/3 complex mediates the formation of branched actin networks in the cytoplasm, providing the force for cell motility. Seems to contact the pointed end of the daughter actin filament. In addition to its role in the cytoplasmic cytoskeleton, the Arp2/3 complex also promotes actin polymerization in the nucleus, thereby regulating gene transcription and repair of damaged DNA. The Arp2/3 complex promotes homologous recombination (HR) repair in response to DNA damage by promoting nuclear actin polymerization, leading to drive motility of double-strand breaks (DSBs). This Takifugu rubripes (Japanese pufferfish) protein is Actin-related protein 3 (actr3).